The primary structure comprises 552 residues: Glycosyltransferase family 92 protein RCOM_0530710 (552 aa).

A helical; Signal-anchor membrane pass occupies residues 12–34 (WNRFFWCTLLLVLSCVLFTASTF). Positions 277–520 (KPHEMCICTM…GTRAVEPPDW (244 aa)) constitute a GT92 domain.

It belongs to the glycosyltransferase 92 family.

The protein resides in the membrane. In Ricinus communis (Castor bean), this protein is Glycosyltransferase family 92 protein RCOM_0530710.